A 677-amino-acid chain; its full sequence is Glutamine--fructose-6-phosphate aminotransferase [isomerizing] 1 (677 aa).

Cys2 acts as the Nucleophile in catalysis. Residues 2-269 enclose the Glutamine amidotransferase type-2 domain; the sequence is CGIFAYLNFH…DGEVVNLKDG (268 aa). 2 consecutive SIS domains span residues 353-492 and 524-667; these read HLKT…DTIS and LAQL…VDQP. Residues 370–371, 415–417, Thr420, and His571 each bind substrate; these read TS and SQS.

As to quaternary structure, homotetramer, may also exist as homodimers. In terms of tissue distribution, highly expressed in flowers specifically in mature anthers, mature pollen grains and pollen tubes. Barely observed in roots, leaves and stems.

It carries out the reaction D-fructose 6-phosphate + L-glutamine = D-glucosamine 6-phosphate + L-glutamate. Its pathway is nucleotide-sugar biosynthesis; UDP-N-acetyl-alpha-D-glucosamine biosynthesis; alpha-D-glucosamine 6-phosphate from D-fructose 6-phosphate: step 1/1. Functionally, controls the flux of glucose into the hexosamine biosynthetic pathway (HBP) leading to glucosamine (GlcN) content homeostasis. Involved in regulating the availability of precursors for N- and O-linked glycosylation of proteins. Required during pollen maturation and pollen tube formation by triggering polar deposition of pectin and callose in the pollen cell wall. Promotes tolerance to tunicamycin (Tm), an inhibitor of proteins N-glycosylation in endoplasmic reticulum (ER). This chain is Glutamine--fructose-6-phosphate aminotransferase [isomerizing] 1, found in Arabidopsis thaliana (Mouse-ear cress).